The following is a 406-amino-acid chain: Endoplasmic reticulum resident protein 44 (406 aa).

Residues 1 to 29 (MHPAVFLSLPDLRCSLLLLVTWVFTPVTT) form the signal peptide. The Thioredoxin domain maps to 30–138 (EITSLDTENI…VKALADYIRQ (109 aa)). 2 cysteine pairs are disulfide-bonded: Cys-189/Cys-241 and Cys-301/Cys-318. Positions 236–285 (WIQDKCVPLVREITFENGEELTEEGLPFLILFHMKEDTESLEIFQNEVAR) are interaction with ITPR1. A disordered region spans residues 360-387 (FHHGPDPTDTAPGEQAQDVASSPPESSF). Residues 377–387 (DVASSPPESSF) are compositionally biased toward polar residues. The Prevents secretion from ER motif lies at 403 to 406 (RDEL).

Forms mixed disulfides with both ERO1A and ERO1B and cargo folding intermediates; the interactions with ERO1A and ERO1B result in their retention in the endoplasmic reticulum. Directly interacts with ITPR1 in a pH-, redox state- and calcium-dependent manner, but not with ITPR2 or ITPR3. The strength of this interaction inversely correlates with calcium concentration.

It localises to the endoplasmic reticulum lumen. Mediates thiol-dependent retention in the early secretory pathway, forming mixed disulfides with substrate proteins through its conserved CRFS motif. Inhibits the calcium channel activity of ITPR1. May have a role in the control of oxidative protein folding in the endoplasmic reticulum. Required to retain ERO1A and ERO1B in the endoplasmic reticulum. In Homo sapiens (Human), this protein is Endoplasmic reticulum resident protein 44 (ERP44).